A 93-amino-acid polypeptide reads, in one-letter code: MKTLVLLSALFLLAFQVQADPIQNTDEETNTEVQPQEEDQAVSVSFGNPEGSDLQEESLRDLGCYCRKRGCTRRERINGTCRKGHLMYTLCCL.

The signal sequence occupies residues 1–19 (MKTLVLLSALFLLAFQVQA). A propeptide spanning residues 20–58 (DPIQNTDEETNTEVQPQEEDQAVSVSFGNPEGSDLQEES) is cleaved from the precursor. Residues 24 to 55 (NTDEETNTEVQPQEEDQAVSVSFGNPEGSDLQ) are disordered. Acidic residues predominate over residues 25–40 (TDEETNTEVQPQEEDQ). 3 disulfides stabilise this stretch: Cys-64–Cys-92, Cys-66–Cys-81, and Cys-71–Cys-91.

Belongs to the alpha-defensin family.

Its subcellular location is the secreted. In terms of biological role, may have microbicidal activities. The polypeptide is Alpha-defensin 26 (Defa26) (Mus musculus (Mouse)).